We begin with the raw amino-acid sequence, 1054 residues long: Translation initiation factor IF-2 (1054 aa).

Disordered stretches follow at residues 48–390 (RSKL…LDLD) and 409–458 (LARP…GTEP). Over residues 65-76 (KPPSESLPPEPP) the composition is skewed to pro residues. The segment covering 160 to 169 (SEATQKPETV) has biased composition (polar residues). Residues 179–193 (SESAAAKASGSEPSP) are compositionally biased toward low complexity. Pro residues-rich tracts occupy residues 221-235 (PQKA…PSEA) and 304-316 (PTRP…PPEP). A compositionally biased stretch (basic residues) spans 365–378 (RAARVQAKRKRSRR). Over residues 421–437 (PPAATAAPPARPRPAAR) the composition is skewed to low complexity. Positions 545 to 718 (SRPPVVTIMG…LLVADVAELQ (174 aa)) constitute a tr-type G domain. The segment at 554–561 (GHVDHGKT) is G1. A GTP-binding site is contributed by 554–561 (GHVDHGKT). The segment at 579 to 583 (GITQR) is G2. Residues 604–607 (DTPG) form a G3 region. Residues 604–608 (DTPGH) and 658–661 (NKID) contribute to the GTP site. The tract at residues 658-661 (NKID) is G4. The G5 stretch occupies residues 694–696 (SAL).

It belongs to the TRAFAC class translation factor GTPase superfamily. Classic translation factor GTPase family. IF-2 subfamily.

It localises to the cytoplasm. One of the essential components for the initiation of protein synthesis. Protects formylmethionyl-tRNA from spontaneous hydrolysis and promotes its binding to the 30S ribosomal subunits. Also involved in the hydrolysis of GTP during the formation of the 70S ribosomal complex. This chain is Translation initiation factor IF-2, found in Synechococcus sp. (strain JA-2-3B'a(2-13)) (Cyanobacteria bacterium Yellowstone B-Prime).